The following is a 602-amino-acid chain: Cytokine-like nuclear factor N-PAC (602 aa).

Residues serine 8 and serine 10 each carry the phosphoserine modification. The PWWP domain occupies 22–81; that stretch reads PKDLIWAKMKGFTPWPGMIVDPPLDLLSQQRRANTKCVFFFGSRNFAWIEENNIKPFEGP. The disordered stretch occupies residues 162-262; it reads GSPDEGDGLD…ASSTPTGRRR (101 aa). 3 stretches are compositionally biased toward polar residues: residues 176–188, 204–217, and 224–233; these read ADSS…SPAV, AATS…SAKS, and SAQQSPSGPS. Phosphoserine is present on residues serine 224, serine 228, and serine 243. Residues 309-602 form a dehydrogenase domain region; the sequence is RDIVPSEQTF…SSAVFVRSRF (294 aa). NAD(+) is bound by residues 319–333, threonine 411, and arginine 554; that span reads GFLG…IVKD.

It belongs to the HIBADH-related family. NP60 subfamily. Binds to mononucleosomes. Interacts with male-specific lethal (MSL) histone acetyltransferase complex at least composed of mof, msl-1, msl-2 and msl-3.

The protein localises to the chromosome. Functionally, nucleosome-destabilizing factor that is recruited to genes during transcriptional activation and colocalizes with a subset of trimethylated 'Lys-36' histone H3 (H3K36me3)-enriched regions. Binds DNA (in vitro). Facilitates Pol II transcription through nucleosomes. Facilitates male-specific lethal (MSL) histone acetyltransferase complex targeting to active genes on the X chromosome. Stimulates the acetylation of 'Lys-56' of nucleosomal histone H3 (H3K56ac) by nej. May have oxidoreductase activity. The polypeptide is Cytokine-like nuclear factor N-PAC (Drosophila melanogaster (Fruit fly)).